The following is a 538-amino-acid chain: Syncytin-2 (538 aa).

The signal sequence occupies residues 1–15; that stretch reads MGLLLLVLILTPSLA. At 16–478 the chain is on the extracellular side; it reads AYRHPDFPLL…GWLNWEGTWK (463 aa). Residues 43–46 carry the CXXC motif; sequence CWLC. Disulfide bonds link Cys43-Cys46, Cys43-Cys439, and Cys431-Cys438. N-linked (GlcNAc...) asparagine glycans are attached at residues Asn133, Asn146, Asn177, Asn220, Asn241, Asn247, Asn312, and Asn332. Residues 354 to 374 form a fusion peptide region; sequence FIPLLAGLGILAGTGTGIAGI. A CKS-17 motif is present at residues 414–430; the sequence is LQNRRGLDMLTAAQGGI. The CX6CC signature appears at 431 to 439; it reads CLALDEKCC. N-linked (GlcNAc...) asparagine glycosylation is present at Asn443. A helical membrane pass occupies residues 479 to 499; sequence WFSWVLPLTGPLVSLLLLLLF. Residues 500–538 are Cytoplasmic-facing; it reads GPCLLNLITQFVSSRLQAIKLQTNLSAGRRPRNIQESPF.

Belongs to the gamma type-C retroviral envelope protein family. HERV class-I FRD env subfamily. The surface and transmembrane proteins form a heterodimer. They are attached by non-covalent interactions or by a labile interchain disulfide bond. Post-translationally, specific enzymatic cleavages in vivo yield the mature SU and TM proteins. The CXXC motif is highly conserved across a broad range of retroviral envelope proteins. It is thought to participate in the formation of a labile disulfide bond possibly with the CX6CC motif present in the transmembrane protein.

It localises to the virion. It is found in the cell membrane. In terms of biological role, this endogenous retroviral envelope protein has retained its original fusogenic properties and participates in trophoblast fusion and the formation of a syncytium during placenta morphogenesis. The interaction with MFSD2A is apparently important for this process. Endogenous envelope proteins may have kept, lost or modified their original function during evolution but this one can still make pseudotypes with MLV, HIV-1 or SIV-1 virions and confer infectivity. Retroviral envelope proteins mediate receptor recognition and membrane fusion during early infection. The surface protein mediates receptor recognition, while the transmembrane protein anchors the envelope heterodimer to the viral membrane through one transmembrane domain. The other hydrophobic domain, called fusion peptide, mediates fusion of the viral membrane with the target cell membrane. This chain is Syncytin-2 (ERVFRD-1), found in Gorilla gorilla gorilla (Western lowland gorilla).